The following is a 352-amino-acid chain: Elongation factor Tu, mitochondrial (352 aa).

The tr-type G domain occupies 45–241 (RPHVNVGTIG…AIDTHIPLPH (197 aa)). The segment at 54-61 (GHVDHGKT) is G1. GTP contacts are provided by Asp57, Gly59, Lys60, Thr61, and Thr62. Residue Thr61 participates in Mg(2+) binding. Residues 95–99 (GITIN) are G2. The interval 116 to 119 (DCPG) is G3. GTP is bound by residues Asn171, Asp174, Ser209, Ala210, and Leu211. A G4 region spans residues 171-174 (NKAD). Residues 209 to 211 (SAL) are G5.

It is found in the mitochondrion. The enzyme catalyses GTP + H2O = GDP + phosphate + H(+). GTP hydrolase that promotes the GTP-dependent binding of aminoacyl-tRNA to the A-site of ribosomes during protein biosynthesis. The protein is Elongation factor Tu, mitochondrial of Gallus gallus (Chicken).